Consider the following 242-residue polypeptide: 1-(5-phosphoribosyl)-5-[(5-phosphoribosylamino)methylideneamino] imidazole-4-carboxamide isomerase (242 aa).

Residue Asp10 is the Proton acceptor of the active site. The active-site Proton donor is the Asp131.

This sequence belongs to the HisA/HisF family.

The protein localises to the cytoplasm. It catalyses the reaction 1-(5-phospho-beta-D-ribosyl)-5-[(5-phospho-beta-D-ribosylamino)methylideneamino]imidazole-4-carboxamide = 5-[(5-phospho-1-deoxy-D-ribulos-1-ylimino)methylamino]-1-(5-phospho-beta-D-ribosyl)imidazole-4-carboxamide. The protein operates within amino-acid biosynthesis; L-histidine biosynthesis; L-histidine from 5-phospho-alpha-D-ribose 1-diphosphate: step 4/9. The sequence is that of 1-(5-phosphoribosyl)-5-[(5-phosphoribosylamino)methylideneamino] imidazole-4-carboxamide isomerase from Bifidobacterium animalis subsp. lactis (strain AD011).